The following is an 861-amino-acid chain: Leucine--tRNA ligase (861 aa).

The 'HIGH' region signature appears at 42 to 52 (PYPSGKLHMGH). Positions 620–624 (KMSKS) match the 'KMSKS' region motif. Lys-623 is a binding site for ATP.

This sequence belongs to the class-I aminoacyl-tRNA synthetase family.

It is found in the cytoplasm. It catalyses the reaction tRNA(Leu) + L-leucine + ATP = L-leucyl-tRNA(Leu) + AMP + diphosphate. In Marinobacter nauticus (strain ATCC 700491 / DSM 11845 / VT8) (Marinobacter aquaeolei), this protein is Leucine--tRNA ligase.